The following is an 837-amino-acid chain: Telomere length regulation protein TEL2 homolog (837 aa).

Met1 carries the post-translational modification N-acetylmethionine. A hydroxyproline mark is found at Pro374, Pro419, and Pro422. Residues 444–472 (QPAGDGASEAGTSLVPATAEPPAETPAEI) are disordered. The residue at position 456 (Ser456) is a Phosphoserine. Positions 459–471 (PATAEPPAETPAE) are enriched in low complexity. The residue at position 485 (Ser485) is a Phosphoserine; by CK2. Residues Ser487 and Ser491 each carry the phosphoserine modification. The tract at residues 627–651 (GCLGRTPQPGSPSPNTPCLPEAAVS) is disordered. A phosphoserine mark is found at Ser688 and Ser836.

Belongs to the TEL2 family. As to quaternary structure, component of the TTT complex composed of TELO2, TTI1 and TTI2. Interacts with ATM, ATR, MTOR, PRKDC, RUVBL2, TTI1, TTI2, SMG1 and TRRAP. Component of the mTORC1 and mTORC2 complexes. Interacts (phosphorylated form) with PIH1D1 which mediates interaction of TELO2 with the R2TP complex composed of RUVBL1, RUVBL2, PIH1D1, and RPAP3. In terms of processing, hydroxylation by PHD3 is required for a proper interaction with ATR, and activation of the ATR/CHK1/p53 pathway following DNA damage. Post-translationally, phosphorylated at Ser-485 by CK2 following growth factor deprivation, leading to its subsequent ubiquitination by the SCF(FBXO9) complex. Phosphorylation by CK2 only takes place when TELO2 is bound to mTORC1, not mTORC2; leading to selective ubiquitination of mTORC1-associated protein. Ubiquitinated by the SCF(FBXO9) complex following phosphorylation by CK2 in response to growth factor deprivation, leading to its degradation by the proteasome. Only mTORC1-associated protein is ubiquitinated and degraded, leading to selective inactivation of mTORC1 to restrain cell growth and protein translation, while mTORC2 is activated due to the relief of feedback inhibition by mTORC1.

It localises to the cytoplasm. The protein resides in the membrane. It is found in the nucleus. The protein localises to the chromosome. Its subcellular location is the telomere. Regulator of the DNA damage response (DDR). Part of the TTT complex that is required to stabilize protein levels of the phosphatidylinositol 3-kinase-related protein kinase (PIKK) family proteins. The TTT complex is involved in the cellular resistance to DNA damage stresses, like ionizing radiation (IR), ultraviolet (UV) and mitomycin C (MMC). Together with the TTT complex and HSP90 may participate in the proper folding of newly synthesized PIKKs. Promotes assembly, stabilizes and maintains the activity of mTORC1 and mTORC2 complexes, which regulate cell growth and survival in response to nutrient and hormonal signals. May be involved in telomere length regulation. The protein is Telomere length regulation protein TEL2 homolog (TELO2) of Homo sapiens (Human).